Reading from the N-terminus, the 385-residue chain is 4-hydroxy-3-methylbut-2-en-1-yl diphosphate synthase (flavodoxin) 1 (385 aa).

[4Fe-4S] cluster contacts are provided by cysteine 280, cysteine 283, cysteine 315, and glutamate 322.

This sequence belongs to the IspG family. It depends on [4Fe-4S] cluster as a cofactor.

The enzyme catalyses (2E)-4-hydroxy-3-methylbut-2-enyl diphosphate + oxidized [flavodoxin] + H2O + 2 H(+) = 2-C-methyl-D-erythritol 2,4-cyclic diphosphate + reduced [flavodoxin]. The protein operates within isoprenoid biosynthesis; isopentenyl diphosphate biosynthesis via DXP pathway; isopentenyl diphosphate from 1-deoxy-D-xylulose 5-phosphate: step 5/6. Its function is as follows. Converts 2C-methyl-D-erythritol 2,4-cyclodiphosphate (ME-2,4cPP) into 1-hydroxy-2-methyl-2-(E)-butenyl 4-diphosphate. The polypeptide is 4-hydroxy-3-methylbut-2-en-1-yl diphosphate synthase (flavodoxin) 1 (Streptomyces avermitilis (strain ATCC 31267 / DSM 46492 / JCM 5070 / NBRC 14893 / NCIMB 12804 / NRRL 8165 / MA-4680)).